The following is a 793-amino-acid chain: Probable alpha-fucosidase A (793 aa).

The first 20 residues, 1-20, serve as a signal peptide directing secretion; it reads MLISGSSAALCALALPFAAA. Residues asparagine 30, asparagine 83, asparagine 100, asparagine 104, asparagine 123, asparagine 179, asparagine 199, asparagine 234, asparagine 323, asparagine 597, asparagine 622, asparagine 660, and asparagine 757 are each glycosylated (N-linked (GlcNAc...) asparagine).

The protein belongs to the glycosyl hydrolase 95 family.

Its subcellular location is the secreted. It carries out the reaction an alpha-L-fucoside + H2O = L-fucose + an alcohol. In terms of biological role, alpha-fucosidase involved in degradation of fucosylated xyloglucans. Hydrolyzes alpha-1,2-linked fucose. The chain is Probable alpha-fucosidase A (afcA) from Aspergillus niger (strain ATCC MYA-4892 / CBS 513.88 / FGSC A1513).